A 125-amino-acid polypeptide reads, in one-letter code: MTLLKEFFIVGAGGFVGSVMRYLMAVVLASASLKHGFPYATLAVNVLGSFMIGFLSQPFSANPYGRLFVMVGVLGGFTTFSTFSNETLLLYNNGQFIFASLNVLLNVLLCLVGVFCGFEAAKIIL.

The next 4 helical transmembrane spans lie at 7 to 27, 36 to 56, 63 to 83, and 96 to 116; these read FFIV…MAVV, GFPY…GFLS, PYGR…FSTF, and FIFA…GVFC. 2 residues coordinate Na(+): glycine 75 and threonine 78.

It belongs to the fluoride channel Fluc/FEX (TC 1.A.43) family.

It localises to the cell inner membrane. It catalyses the reaction fluoride(in) = fluoride(out). Its activity is regulated as follows. Na(+) is not transported, but it plays an essential structural role and its presence is essential for fluoride channel function. Functionally, fluoride-specific ion channel. Important for reducing fluoride concentration in the cell, thus reducing its toxicity. The chain is Fluoride-specific ion channel FluC from Elusimicrobium minutum (strain Pei191).